The primary structure comprises 104 residues: Small ribosomal subunit protein bS16 (104 aa).

It belongs to the bacterial ribosomal protein bS16 family.

The protein is Small ribosomal subunit protein bS16 of Gemmatimonas aurantiaca (strain DSM 14586 / JCM 11422 / NBRC 100505 / T-27).